The following is a 396-amino-acid chain: Putative F-box/kelch-repeat protein At4g11770 (396 aa).

The region spanning Pro-9–Arg-55 is the F-box domain. Kelch repeat units lie at residues Tyr-151–Gly-197, Lys-198–Lys-248, and Tyr-250–Lys-296.

In Arabidopsis thaliana (Mouse-ear cress), this protein is Putative F-box/kelch-repeat protein At4g11770.